The sequence spans 60 residues: Large ribosomal subunit protein uL30 (60 aa).

Belongs to the universal ribosomal protein uL30 family. As to quaternary structure, part of the 50S ribosomal subunit.

The chain is Large ribosomal subunit protein uL30 from Dehalococcoides mccartyi (strain ATCC BAA-2100 / JCM 16839 / KCTC 5957 / BAV1).